The chain runs to 149 residues: MKFFVVFVMAVAYSKLYELIKNVKDEKEAEELCKIIEEFFEKQCKENVSKKFEEQKPVLKLELKEELRKELTTKEDLELIGEKILRYVDNKINQVIEKINQLDKKIDEGFYQLDKKVDTLKRDIIIIALIIILANYAPSIIGKILSFLK.

Residues 124 to 144 (IIIIALIIILANYAPSIIGKI) traverse the membrane as a helical segment.

It belongs to the M.jannaschii MJ0023/MJ0349/MJ1072/MJ1074/MJ1107/MJECL16 family.

It localises to the membrane. This is an uncharacterized protein from Methanocaldococcus jannaschii (strain ATCC 43067 / DSM 2661 / JAL-1 / JCM 10045 / NBRC 100440) (Methanococcus jannaschii).